Reading from the N-terminus, the 315-residue chain is Solute carrier family 25 member 32 (315 aa).

3 Solcar repeats span residues 20–109 (HVRY…IKSY), 118–209 (LEAT…LKLK), and 222–306 (LSTV…VSHF). 6 helical membrane passes run 26-43 (LVAG…LHPL), 89-106 (VWGA…YNAI), 123-143 (YLVS…PLWV), 186-203 (FVPG…FMAY), 227-243 (YISV…AATY), and 281-300 (GIAP…FVVY).

It belongs to the mitochondrial carrier (TC 2.A.29) family.

The protein localises to the mitochondrion inner membrane. The catalysed reaction is FAD(in) = FAD(out). Its function is as follows. Facilitates flavin adenine dinucleotide (FAD) translocation across the mitochondrial inner membrane into the mitochondrial matrix where it acts as a redox cofactor to assist flavoenzyme activities in fundamental metabolic processes including fatty acid beta-oxidation, amino acid and choline metabolism as well as mitochondrial electron transportation. In particular, provides FAD to DLD dehydrogenase of the glycine cleavage system, part of mitochondrial one-carbon metabolic pathway involved in neural tube closure in early embryogenesis. In Macaca fascicularis (Crab-eating macaque), this protein is Solute carrier family 25 member 32.